The following is a 211-amino-acid chain: Probable metallo-hydrolase YqgX (211 aa).

7 residues coordinate Zn(2+): His54, His56, Asp58, His59, His130, Asp149, and His190.

It belongs to the metallo-beta-lactamase superfamily. Glyoxalase II family. Requires Zn(2+) as cofactor.

This is Probable metallo-hydrolase YqgX (yqgX) from Bacillus subtilis (strain 168).